Consider the following 469-residue polypeptide: Transcription factor SOX-10 (469 aa).

Disordered regions lie at residues 1 to 70 (MAEE…DDDK), 163 to 203 (LRMQ…QGGA), 215 to 278 (LDHR…DFGN), 357 to 378 (AQVK…QPST), and 436 to 469 (RPLY…LSRP). Positions 23-32 (LSPGSAPSLG) are enriched in low complexity. Position 24 is a phosphoserine (Ser-24). The segment covering 33 to 44 (PDGGGGGGGGSG) has biased composition (gly residues). The dimerization (DIM) stretch occupies residues 65–105 (EADDDKFPVCIREAVSQVLSGYDWTLVPMPVRVNGASKSKP). Residues 107–175 (VKRPMNAFMV…QHKKDHPDYK (69 aa)) constitute a DNA-binding region (HMG box). 2 stretches are compositionally biased toward basic and acidic residues: residues 163–176 (LRMQ…DYKY) and 257–274 (ADPK…KPHI). A transactivation domain (TAM) region spans residues 231–313 (PEHPSGQSHG…LPPNGHPGHV (83 aa)). Residues 356 to 469 (KAQVKTETAG…QPVYTTLSRP (114 aa)) are transactivation domain (TAC). Residues 443 to 469 (SDPSPSGPQSHSPTHWEQPVYTTLSRP) show a composition bias toward polar residues.

As to quaternary structure, monomer. Interacts with ARMCX3 at the mitochondrial outer membrane surface. Interacts with PAX3.

Its subcellular location is the cytoplasm. The protein resides in the nucleus. It localises to the mitochondrion outer membrane. In terms of biological role, transcription factor that plays a central role in developing and mature glia. Specifically activates expression of myelin genes, during oligodendrocyte (OL) maturation, such as DUSP15 and MYRF, thereby playing a central role in oligodendrocyte maturation and CNS myelination. Once induced, MYRF cooperates with SOX10 to implement the myelination program. Transcriptional activator of MITF, acting synergistically with PAX3. Transcriptional activator of MBP, via binding to the gene promoter. The protein is Transcription factor SOX-10 (SOX10) of Sus scrofa (Pig).